Consider the following 1708-residue polypeptide: Clathrin heavy chain 2 (1708 aa).

The interval 1-492 (MAAANAPIAM…VDNDLALKIY (492 aa)) is globular terminal domain. 7 WD40-like repeat regions span residues 25 to 67 (FVTF…RPIT), 68 to 113 (ADSA…MPEQ), 114 to 155 (VVFW…ANLA), 156 to 205 (NNQI…QALE), 206 to 270 (AHAA…PDFQ), 271 to 314 (DDFP…ISPD), and 315 to 343 (PIFLTAESSASGGFYAINRRGQVLHATVN). The interval 462–478 (ENWLAEDKLECSEELGD) is binding site for the uncoating ATPase, involved in lattice disassembly. The segment at 493 to 536 (IKARATPKVVAAFAERREFDKILIYSKQVGYTPDYLFLLQTILR) is flexible linker. Residues 537 to 648 (TDPQGAVNFA…RALQHYTELP (112 aa)) are distal segment. A heavy chain arm region spans residues 537–1708 (TDPQGAVNFA…AYGMPPMGSY (1172 aa)). CHCR repeat units lie at residues 551 to 697 (QMEG…QIVV), 700 to 842 (AKEY…PEDF), 847 to 986 (ILSV…QLID), 993 to 1138 (LPES…VSEA), 1142 to 1283 (FIRA…FRLA), 1288 to 1434 (LNII…DLIN), and 1437 to 1580 (LNVL…KECF). The proximal segment stretch occupies residues 653 to 1708 (VMVNTHAIEP…AYGMPPMGSY (1056 aa)). The tract at residues 1227 to 1536 (AAKIIYAFIS…YIYKKAGRWK (310 aa)) is involved in binding clathrin light chain. Residues 1564–1708 (SEDLLVYFIE…AYGMPPMGSY (145 aa)) form a trimerization region.

Belongs to the clathrin heavy chain family. In terms of assembly, clathrin triskelions, composed of 3 heavy chains and 3 light chains, are the basic subunits of the clathrin coat.

It is found in the cytoplasmic vesicle membrane. The protein localises to the membrane. It localises to the coated pit. In terms of biological role, clathrin is the major protein of the polyhedral coat of coated pits and vesicles. The protein is Clathrin heavy chain 2 of Oryza sativa subsp. japonica (Rice).